Here is a 245-residue protein sequence, read N- to C-terminus: Orotidine 5'-phosphate decarboxylase (245 aa).

Residues aspartate 22, lysine 44, 71 to 80 (DLKFHDIPNT), threonine 131, arginine 192, glutamine 201, glycine 221, and arginine 222 contribute to the substrate site. The active-site Proton donor is the lysine 73.

Belongs to the OMP decarboxylase family. Type 1 subfamily. Homodimer.

It catalyses the reaction orotidine 5'-phosphate + H(+) = UMP + CO2. Its pathway is pyrimidine metabolism; UMP biosynthesis via de novo pathway; UMP from orotate: step 2/2. Its function is as follows. Catalyzes the decarboxylation of orotidine 5'-monophosphate (OMP) to uridine 5'-monophosphate (UMP). The chain is Orotidine 5'-phosphate decarboxylase from Salmonella newport (strain SL254).